We begin with the raw amino-acid sequence, 200 residues long: Inner membrane-spanning protein YciB (200 aa).

Transmembrane regions (helical) follow at residues 7–27 (HPLF…FVNA), 32–52 (FAAT…SYVV), 56–76 (IPLM…LTLV), 93–113 (LFAA…AIMF), 126–146 (ILTF…EIIW), and 153–173 (FWVG…AIAQ).

This sequence belongs to the YciB family.

It localises to the cell inner membrane. In terms of biological role, plays a role in cell envelope biogenesis, maintenance of cell envelope integrity and membrane homeostasis. The polypeptide is Inner membrane-spanning protein YciB (Bradyrhizobium sp. (strain ORS 278)).